We begin with the raw amino-acid sequence, 420 residues long: Outer capsid protein P8 (420 aa).

Belongs to the phytoreovirus outer capsid protein P8 family. In terms of assembly, homotrimer. Homomultimer. Interacts with host peroxisomal glycolate oxidase (GOX). This interaction mediates its relocation to virus factories peripheral to host peroxisomes.

The protein localises to the virion. Its subcellular location is the host cytoplasm. Its function is as follows. Capsid protein which self-assembles to form the outer icosahedral capsid with a T=13 symmetry, about 70 nm in diameter and consisting of 780 molecules capsid proteins. The protein is Outer capsid protein P8 of Alopecurus aequalis (Barnyard grass).